A 115-amino-acid polypeptide reads, in one-letter code: U3-lycotoxin-Ls1d (115 aa).

An N-terminal signal peptide occupies residues 1–20 (MKFVLLFGVLLVTLFSYSSA). Residues 21 to 44 (EMLDDFDQADEDELLSLIEKEEAR) constitute a propeptide that is removed on maturation. Disulfide bonds link C48-C63, C55-C72, C62-C87, and C74-C85.

Belongs to the neurotoxin 19 (CSTX) family. 01 subfamily. Expressed by the venom gland.

It localises to the secreted. The protein is U3-lycotoxin-Ls1d of Lycosa singoriensis (Wolf spider).